A 192-amino-acid chain; its full sequence is Thymidine kinase (192 aa).

Residues 9–16 (SAMNAGKS) and 87–90 (DECQ) each bind ATP. Residue E88 is the Proton acceptor of the active site. C145, C147, C182, and H185 together coordinate Zn(2+).

The protein belongs to the thymidine kinase family. Homotetramer.

It localises to the cytoplasm. The enzyme catalyses thymidine + ATP = dTMP + ADP + H(+). This is Thymidine kinase from Photobacterium profundum (strain SS9).